Here is a 43-residue protein sequence, read N- to C-terminus: uncharacterized protein (43 aa).

This is an uncharacterized protein from Rickettsia prowazekii (strain Madrid E).